We begin with the raw amino-acid sequence, 581 residues long: Serine/threonine protein phosphatase 2A 55 kDa regulatory subunit B alpha isoform (581 aa).

Positions 1-27 (MMNPDGGDGDRLEAAGAGSSSAQQGHP) are disordered. The segment covering 14–25 (AAGAGSSSAQQG) has biased composition (low complexity). WD repeat units follow at residues 47 to 86 (QEVD…DNAS) and 123 to 164 (EIEE…VKQV). Residues 172–189 (RSVGTGTSSSASTSSSRG) are compositionally biased toward low complexity. Residues 172-192 (RSVGTGTSSSASTSSSRGLLP) are disordered. 4 WD repeats span residues 241–279 (AHDY…QSFN), 290–330 (DLTE…LCDN), 349–387 (EIIA…GPVS), and 492–530 (DFST…RKFI).

This sequence belongs to the phosphatase 2A regulatory subunit B family. In terms of assembly, PP2A consists of a common heteromeric enzyme, composed of a catalytic subunit (subunits C), a constant regulatory subunit (subunit A), and a variety of regulatory subunits such as subunits B (the R2/B/PR55/B55, R3/B''/PR72/PR130/PR59 and R5/B'/B56 families).

The B regulatory subunit may modulate substrate selectivity and catalytic activity, and may also direct the localization of the catalytic enzyme to a particular subcellular compartment. The sequence is that of Serine/threonine protein phosphatase 2A 55 kDa regulatory subunit B alpha isoform from Oryza sativa subsp. japonica (Rice).